An 87-amino-acid chain; its full sequence is U3-theraphotoxin-Hhn1a 16 (87 aa).

Positions 1 to 24 (MVNMKASMFLTFAGLVLLFVVCYA) are cleaved as a signal peptide. A propeptide spanning residues 25-52 (SESEEKEFPKEMLSSIFAVDNDFKQGER) is cleaved from the precursor. 3 cysteine pairs are disulfide-bonded: Cys-54–Cys-67, Cys-61–Cys-72, and Cys-66–Cys-79.

It belongs to the neurotoxin 10 (Hwtx-1) family. 51 (Hntx-8) subfamily. Hntx-8 sub-subfamily. Expressed by the venom gland.

The protein localises to the secreted. In terms of biological role, ion channel inhibitor. The polypeptide is U3-theraphotoxin-Hhn1a 16 (Cyriopagopus hainanus (Chinese bird spider)).